Consider the following 479-residue polypeptide: Glycine betaine methyltransferase (479 aa).

It belongs to the trimethylamine methyltransferase family.

The catalysed reaction is Co(I)-[glycine betaine-specific corrinoid protein] + glycine betaine + H(+) = methyl-Co(III)-[glycine betaine-specific corrinoid protein] + N,N-dimethylglycine. Its function is as follows. Methyltransferase able to methylate free cob(I)alamin in vitro, using glycine betaine as the methyl donor, yealding methylcobalamin (methylCbl) and dimethylglycine. In vivo, probably carries out the methylation of a corrinoid protein, likely the adjacently encoded DSY3155, with glycine betaine, to then supply methyl groups to tetrahydrofolate (THF) for ultimate conversion to carbon dioxide; oxidation of the methyl group would also provide reducing equivalents for anaerobic respiration. Thus, may function in the pathway that allows anaerobic methylotrophic growth of D.hafniense using glycine betaine. Cannot use quaternary amines such as carnitine and choline as substrates, nor tertiary amines such as dimethylglycine or trimethylamine. The chain is Glycine betaine methyltransferase from Desulfitobacterium hafniense (strain Y51).